The primary structure comprises 163 residues: Nucleotide-binding protein DET1318 (163 aa).

It belongs to the YajQ family.

Nucleotide-binding protein. The protein is Nucleotide-binding protein DET1318 of Dehalococcoides mccartyi (strain ATCC BAA-2266 / KCTC 15142 / 195) (Dehalococcoides ethenogenes (strain 195)).